A 399-amino-acid polypeptide reads, in one-letter code: O-antigen polymerase (399 aa).

Helical transmembrane passes span 4-24 (FPPG…LVLV), 37-57 (LVFT…LTIF), 64-84 (AIMG…LVIL), 97-117 (IVCY…IDVL), 151-171 (GGFS…LLCM), 185-205 (IISF…AILV), 222-242 (FCGI…TNIF), 309-329 (FFWI…IYLA), 353-373 (LYFL…APSS), and 374-394 (STFS…KLTN).

It is found in the cell inner membrane. It catalyses the reaction n lipid-linked O-antigen repeat units = a lipid-linked O antigen + (n-1) polyisoprenyl diphosphate.. The protein operates within bacterial outer membrane biogenesis; LPS O-antigen biosynthesis. In terms of biological role, polymerase involved in the biosynthesis of the lipopolysaccharide (LPS). Catalyzes the polymerization of the O-antigen repeat units on the periplasmic face of the inner membrane, leading to the formation of the lipid-linked O-antigen molecule. The chain is O-antigen polymerase from Salmonella muenchen.